The sequence spans 209 residues: MEQPRKAVVVTGFGPFGEHAVNASWIAVQELEKLGLGDSVDLHVYEIPVEYQTVQRLIPALWEKHSPQLVVHVGVSGMATTVTLEKCGHNKGYKGLDNCRFCPGSQCCVEDGPESIDSIIDMDAVCKRVTTLGLDVSVTISQDAGRYLCDFTYYTSLYRGRGRSAFVHVPPLGKPYNADQLGRALRAIIEEMLGVLEQAEGDISCCHQL.

Residues Glu85, Cys149, and His168 contribute to the active site.

Belongs to the peptidase C15 family. In terms of assembly, monomer.

It localises to the cytoplasm. The catalysed reaction is Release of an N-terminal pyroglutamyl group from a polypeptide, the second amino acid generally not being Pro.. Removes 5-oxoproline from various penultimate amino acid residues except L-proline. The polypeptide is Pyroglutamyl-peptidase 1 (Pgpep1) (Rattus norvegicus (Rat)).